Here is a 256-residue protein sequence, read N- to C-terminus: POU domain class 2-associating factor 1 (256 aa).

The disordered stretch occupies residues 1–23 (MLWQKPTAPEQAPAPARPYQGVR). In terms of domain architecture, OCA spans 16–38 (ARPYQGVRVKEPVKELLRRKRGH).

It belongs to the POU2AF family. As to quaternary structure, interacts with POU2F1/OCT1 and POU2F2/OCT2; the interaction increases POU2F1 and POU2F2 transactivation activity. In terms of processing, ubiquitinated; mediated by SIAH1 or SIAH2 and leading to its subsequent proteasomal degradation. B-cell specific. Detected in mainly in spleen, but also in thymus, periphral blood leukocyte and small intestine.

Its subcellular location is the nucleus. Its function is as follows. Transcriptional coactivator that specifically associates with either POU2F1/OCT1 or POU2F2/OCT2. It boosts the POU2F1/OCT1 mediated promoter activity and to a lesser extent, that of POU2F2/OCT2. It recognizes the POU domains of POU2F1/OCT1 and POU2F2/OCT2. It is essential for the response of B-cells to antigens and required for the formation of germinal centers. Regulates IL6 expression in B cells as POU2F2/OCT2 coactivator. This is POU domain class 2-associating factor 1 from Homo sapiens (Human).